The sequence spans 126 residues: uncharacterized protein (126 aa).

A helical transmembrane segment spans residues 48 to 68 (ILCMFPWQCVVYVFSNFVWLV).

The protein localises to the membrane. This is an uncharacterized protein from Homo sapiens (Human).